An 879-amino-acid chain; its full sequence is Alanine--tRNA ligase (879 aa).

Zn(2+)-binding residues include H567, H571, C669, and H673.

This sequence belongs to the class-II aminoacyl-tRNA synthetase family. The cofactor is Zn(2+).

The protein resides in the cytoplasm. The enzyme catalyses tRNA(Ala) + L-alanine + ATP = L-alanyl-tRNA(Ala) + AMP + diphosphate. Catalyzes the attachment of alanine to tRNA(Ala) in a two-step reaction: alanine is first activated by ATP to form Ala-AMP and then transferred to the acceptor end of tRNA(Ala). Also edits incorrectly charged Ser-tRNA(Ala) and Gly-tRNA(Ala) via its editing domain. This Levilactobacillus brevis (strain ATCC 367 / BCRC 12310 / CIP 105137 / JCM 1170 / LMG 11437 / NCIMB 947 / NCTC 947) (Lactobacillus brevis) protein is Alanine--tRNA ligase.